A 307-amino-acid chain; its full sequence is Alpha N-terminal protein methyltransferase 1 (307 aa).

Over residues 38 to 54 the composition is skewed to low complexity; sequence EPAPAPAAGSNGVAGEQ. The disordered stretch occupies residues 38-60; it reads EPAPAPAAGSNGVAGEQEAGGGG. Residues Gly-123, Arg-128, 145 to 147, 179 to 180, and Gln-195 contribute to the S-adenosyl-L-methionine site; these read EPV and LQ.

This sequence belongs to the methyltransferase superfamily. NTM1 family.

The catalysed reaction is N-terminal L-alanyl-L-prolyl-L-lysyl-[protein] + 3 S-adenosyl-L-methionine = N-terminal N,N,N-trimethyl-L-alanyl-L-prolyl-L-lysyl-[protein] + 3 S-adenosyl-L-homocysteine + 3 H(+). The enzyme catalyses N-terminal L-seryl-L-prolyl-L-lysyl-[protein] + 3 S-adenosyl-L-methionine = N-terminal N,N,N-trimethyl-L-seryl-L-prolyl-L-lysyl-[protein] + 3 S-adenosyl-L-homocysteine + 3 H(+). It catalyses the reaction N-terminal L-prolyl-L-prolyl-L-lysyl-[protein] + 2 S-adenosyl-L-methionine = N-terminal N,N-dimethyl-L-prolyl-L-prolyl-L-lysyl-[protein] + 2 S-adenosyl-L-homocysteine + 2 H(+). In terms of biological role, alpha-N-methyltransferase that methylates the N-terminus of target proteins containing the N-terminal motif [Ala/Pro/Ser]-Pro-Lys when the initiator Met is cleaved. Specifically catalyzes mono-, di- or tri-methylation of exposed alpha-amino group of Ala or Ser residue in the [Ala/Ser]-Pro-Lys motif and mono- or di-methylation of Pro in the Pro-Pro-Lys motif. This is Alpha N-terminal protein methyltransferase 1 from Oryza sativa subsp. indica (Rice).